Consider the following 120-residue polypeptide: Aspartate 1-decarboxylase (120 aa).

Catalysis depends on serine 25, which acts as the Schiff-base intermediate with substrate; via pyruvic acid. Pyruvic acid (Ser) is present on serine 25. Threonine 57 contacts substrate. Tyrosine 58 acts as the Proton donor in catalysis. Substrate is bound at residue 73–75; that stretch reads GAA.

This sequence belongs to the PanD family. In terms of assembly, heterooctamer of four alpha and four beta subunits. Requires pyruvate as cofactor. Post-translationally, is synthesized initially as an inactive proenzyme, which is activated by self-cleavage at a specific serine bond to produce a beta-subunit with a hydroxyl group at its C-terminus and an alpha-subunit with a pyruvoyl group at its N-terminus.

Its subcellular location is the cytoplasm. The enzyme catalyses L-aspartate + H(+) = beta-alanine + CO2. The protein operates within cofactor biosynthesis; (R)-pantothenate biosynthesis; beta-alanine from L-aspartate: step 1/1. In terms of biological role, catalyzes the pyruvoyl-dependent decarboxylation of aspartate to produce beta-alanine. The polypeptide is Aspartate 1-decarboxylase (Thermus thermophilus (strain ATCC 27634 / DSM 579 / HB8)).